Consider the following 348-residue polypeptide: Nuclear receptor subfamily 1 group I member 3 (348 aa).

The nuclear receptor DNA-binding region spans 8 to 83; that stretch reads PRSCMVCGDR…AGMKKEMILS (76 aa). An NR C4-type zinc finger spans residues 11 to 31; sequence CMVCGDRATGYHFHALTCEGC. A Phosphothreonine; by PKC modification is found at Thr-38. The segment at 47-71 adopts an NR C4-type zinc-finger fold; the sequence is CPFAGNCKVNKAQRRHCPACRLQKC. The NR LBD domain occupies 109-348; sequence GQQELVQTLL…MMPLLQEICS (240 aa).

It belongs to the nuclear hormone receptor family. NR1 subfamily. In terms of assembly, heterodimer of NR1I3 and RXR. Interacts with PSMC4. Interacts with ECT2. Directly interacts with DNAJC7; this complex may also include HSP90. Interacts with CRY1. Interacts with CRY2 in a ligand-dependent manner. Phosphorylated at Thr-38 by PKC, dephosphorylation of Thr-38 is required for nuclear translocation and activation.

Its subcellular location is the nucleus. The protein resides in the cytoplasm. It is found in the cytoskeleton. In terms of biological role, binds and transactivates the retinoic acid response elements that control expression of the retinoic acid receptor beta 2 and alcohol dehydrogenase 3 genes. Transactivates both the phenobarbital responsive element module of the human CYP2B6 gene and the CYP3A4 xenobiotic response element. The protein is Nuclear receptor subfamily 1 group I member 3 (NR1I3) of Callorhinus ursinus (Northern fur seal).